The sequence spans 121 residues: Large ribosomal subunit protein uL18 (121 aa).

This sequence belongs to the universal ribosomal protein uL18 family. Part of the 50S ribosomal subunit; part of the 5S rRNA/L5/L18/L25 subcomplex. Contacts the 5S and 23S rRNAs.

In terms of biological role, this is one of the proteins that bind and probably mediate the attachment of the 5S RNA into the large ribosomal subunit, where it forms part of the central protuberance. The polypeptide is Large ribosomal subunit protein uL18 (Paraburkholderia phymatum (strain DSM 17167 / CIP 108236 / LMG 21445 / STM815) (Burkholderia phymatum)).